The chain runs to 197 residues: Nucleoid occlusion factor SlmA (197 aa).

Residues 7–67 (INRREHILQC…GLIEFIEESL (61 aa)) enclose the HTH tetR-type domain. The H-T-H motif DNA-binding region spans 30 to 49 (TTAKLAAEVGVSEAALYRHF). The stretch at 109-136 (DALLGENERLRSRISQLFSKIETHLKQI) forms a coiled coil.

Belongs to the nucleoid occlusion factor SlmA family. As to quaternary structure, homodimer. Interacts with FtsZ.

It is found in the cytoplasm. It localises to the nucleoid. Required for nucleoid occlusion (NO) phenomenon, which prevents Z-ring formation and cell division over the nucleoid. Acts as a DNA-associated cell division inhibitor that binds simultaneously chromosomal DNA and FtsZ, and disrupts the assembly of FtsZ polymers. SlmA-DNA-binding sequences (SBS) are dispersed on non-Ter regions of the chromosome, preventing FtsZ polymerization at these regions. The protein is Nucleoid occlusion factor SlmA of Shewanella pealeana (strain ATCC 700345 / ANG-SQ1).